The chain runs to 134 residues: Small ribosomal subunit protein bS16 (134 aa).

The tract at residues 105 to 134 is disordered; that stretch reads QNERREKRLAIKTRRRQAKKAAEAEGQESA. Residues 114-123 are compositionally biased toward basic residues; the sequence is AIKTRRRQAK.

The protein belongs to the bacterial ribosomal protein bS16 family.

The protein is Small ribosomal subunit protein bS16 of Chlorobium phaeobacteroides (strain BS1).